The primary structure comprises 670 residues: DNA ligase (670 aa).

Residues 32 to 36 (DSEYD), 81 to 82 (SL), and E114 each bind NAD(+). K116 acts as the N6-AMP-lysine intermediate in catalysis. NAD(+)-binding residues include R137, E174, K291, and K315. Residues C409, C412, C427, and C433 each contribute to the Zn(2+) site. Residues 592-670 (ASENLFKDKT…EEEFLAQITR (79 aa)) enclose the BRCT domain.

It belongs to the NAD-dependent DNA ligase family. LigA subfamily. Mg(2+) serves as cofactor. The cofactor is Mn(2+).

It carries out the reaction NAD(+) + (deoxyribonucleotide)n-3'-hydroxyl + 5'-phospho-(deoxyribonucleotide)m = (deoxyribonucleotide)n+m + AMP + beta-nicotinamide D-nucleotide.. DNA ligase that catalyzes the formation of phosphodiester linkages between 5'-phosphoryl and 3'-hydroxyl groups in double-stranded DNA using NAD as a coenzyme and as the energy source for the reaction. It is essential for DNA replication and repair of damaged DNA. In Haemophilus influenzae (strain 86-028NP), this protein is DNA ligase.